The chain runs to 790 residues: Vacuolar protein sorting-associated protein 35C (790 aa).

N-acetylmethionine is present on M1.

This sequence belongs to the VPS35 family. As to quaternary structure, component of the retromer complex which consists of VPS29 (MAG1), VPS26 (VPS26A or VPS26B), VPS35 (VPS35A or VPS35B or VPS35C), VPS5/17 (SNX1 or SNX2A or SNX2B). Component of a retromer subcomplex consisting of VPS29 (MAG1), VPS26 (VPS26A or VPS26B), VPS35 (VPS35A or VPS35B or VPS35C).

The protein resides in the cytoplasm. Its subcellular location is the endosome membrane. It localises to the prevacuolar compartment membrane. The protein localises to the golgi apparatus. It is found in the trans-Golgi network membrane. Its function is as follows. Plays a role in vesicular protein sorting. Component of the membrane-associated retromer complex which is essential in endosome-to-Golgi retrograde transport. Also involved in the efficient sorting of seed storage proteins. The VPS29-VPS26-VPS35 subcomplex may be involved in recycling of specific cargos from endosome to the plasma membrane. The sequence is that of Vacuolar protein sorting-associated protein 35C (VPS35C) from Arabidopsis thaliana (Mouse-ear cress).